Reading from the N-terminus, the 180-residue chain is Translation initiation factor IF-3 (180 aa).

It belongs to the IF-3 family. As to quaternary structure, monomer.

It is found in the cytoplasm. Its function is as follows. IF-3 binds to the 30S ribosomal subunit and shifts the equilibrium between 70S ribosomes and their 50S and 30S subunits in favor of the free subunits, thus enhancing the availability of 30S subunits on which protein synthesis initiation begins. This Salmonella typhi protein is Translation initiation factor IF-3.